We begin with the raw amino-acid sequence, 493 residues long: Cobyric acid synthase (493 aa).

Positions 261-455 (HTRIAVVAYP…LHGLFEDAAV (195 aa)) constitute a GATase cobBQ-type domain. The Nucleophile role is filled by C342. Residue H447 is part of the active site.

The protein belongs to the CobB/CobQ family. CobQ subfamily.

Its pathway is cofactor biosynthesis; adenosylcobalamin biosynthesis. In terms of biological role, catalyzes amidations at positions B, D, E, and G on adenosylcobyrinic A,C-diamide. NH(2) groups are provided by glutamine, and one molecule of ATP is hydrogenolyzed for each amidation. The protein is Cobyric acid synthase of Acidovorax sp. (strain JS42).